We begin with the raw amino-acid sequence, 480 residues long: Bifunctional pantoate ligase/cytidylate kinase (480 aa).

The segment at Met1–Val243 is pantoate--beta-alanine ligase. Met4–His11 is an ATP binding site. His11 (proton donor) is an active-site residue. Gln34 contacts (R)-pantoate. Gln34 contributes to the beta-alanine binding site. Position 123 to 126 (Gly123 to Asp126) interacts with ATP. Gln129 provides a ligand contact to (R)-pantoate. ATP-binding positions include Val152 and Leu160 to Arg163. Residues Phe244–Gly480 form a cytidylate kinase region.

The protein in the N-terminal section; belongs to the pantothenate synthetase family. In the C-terminal section; belongs to the cytidylate kinase family. Type 1 subfamily.

It localises to the cytoplasm. It carries out the reaction (R)-pantoate + beta-alanine + ATP = (R)-pantothenate + AMP + diphosphate + H(+). The catalysed reaction is CMP + ATP = CDP + ADP. The enzyme catalyses dCMP + ATP = dCDP + ADP. It functions in the pathway cofactor biosynthesis; (R)-pantothenate biosynthesis; (R)-pantothenate from (R)-pantoate and beta-alanine: step 1/1. Its function is as follows. Catalyzes the condensation of pantoate with beta-alanine in an ATP-dependent reaction via a pantoyl-adenylate intermediate. Functionally, catalyzes the transfer of a phosphate group from ATP to either CMP or dCMP to form CDP or dCDP and ADP, respectively. The chain is Bifunctional pantoate ligase/cytidylate kinase from Synechococcus sp. (strain CC9605).